The sequence spans 776 residues: Methionine--tRNA ligase (776 aa).

Residues 10–20 carry the 'HIGH' region motif; sequence PYSNGPIHLGH. 4 residues coordinate Zn(2+): cysteine 143, cysteine 146, cysteine 156, and cysteine 159. The 'KMSKS' region motif lies at 375–379; it reads KFSKS. Lysine 378 is an ATP binding site. Positions 676–776 constitute a tRNA-binding domain; that stretch reads DFAKLDMRVG…KPISLGSKVR (101 aa).

This sequence belongs to the class-I aminoacyl-tRNA synthetase family. MetG type 1 subfamily. As to quaternary structure, homodimer. Zn(2+) serves as cofactor.

It localises to the cytoplasm. The catalysed reaction is tRNA(Met) + L-methionine + ATP = L-methionyl-tRNA(Met) + AMP + diphosphate. Its function is as follows. Is required not only for elongation of protein synthesis but also for the initiation of all mRNA translation through initiator tRNA(fMet) aminoacylation. This chain is Methionine--tRNA ligase (metG), found in Nanoarchaeum equitans (strain Kin4-M).